The sequence spans 125 residues: UPF0251 protein DSY3441 (125 aa).

The protein belongs to the UPF0251 family.

In Desulfitobacterium hafniense (strain Y51), this protein is UPF0251 protein DSY3441.